Consider the following 147-residue polypeptide: Cyanate hydratase (147 aa).

Catalysis depends on residues R88, E91, and S114.

This sequence belongs to the cyanase family.

It catalyses the reaction cyanate + hydrogencarbonate + 3 H(+) = NH4(+) + 2 CO2. Functionally, catalyzes the reaction of cyanate with bicarbonate to produce ammonia and carbon dioxide. The chain is Cyanate hydratase from Polaromonas sp. (strain JS666 / ATCC BAA-500).